We begin with the raw amino-acid sequence, 443 residues long: MEKATERQRILLRHLQPSSSSDASLSASACLSKDSAAYQYGDDVVIVAAQRTALCKAKRGSFKDTFPDELLASVLRALIEKTNVNPSEVGDIVVGTVLGPGSQRASECRMAAFYAGFPETVPIRTVNRQCSSGLQAVADVAAAIKAGFYDIGIGAGLESMTTNPRGWKGSVNPNVKKFEQAHNCLLPMGITSENVAHRFNVSREEQDQAAVDSHRKAASATASGKFKDEITPVKTKIVDPKTGDEKPITVSVDDGIRPNTTLSGLAKLKPVFKEDGTTTAGNSSQLSDGAGAVLLMRRNVAMQKGLPILGVFRTFSAVGVDPAIMGVGPAVAIPAAVKAAGLELNDVDLFEINEAFASQFVYCRNKLGLDAEKINVNGGAIAIGHPLGATGARCVATLLHEMKRRGKDCRFGVVSMCIGSGMGAAAVFERGGGVDELCDVRKV.

The transit peptide at 1–30 (MEKATERQRILLRHLQPSSSSDASLSASAC) directs the protein to the peroxisome. The Acyl-thioester intermediate role is filled by Cys-130. Catalysis depends on proton acceptor residues His-385 and Cys-417.

The protein belongs to the thiolase-like superfamily. Thiolase family. In terms of assembly, homodimer. In terms of tissue distribution, low levels in seedlings and leaves.

It is found in the peroxisome. It catalyses the reaction an acyl-CoA + acetyl-CoA = a 3-oxoacyl-CoA + CoA. The protein operates within lipid metabolism; fatty acid metabolism. In terms of biological role, involved in fatty-acid beta-oxidation prior to gluconeogenesis during germination and subsequent seedling growth. Implicated in jasmonic acid (JA) biosynthesis. This chain is 3-ketoacyl-CoA thiolase 1, peroxisomal (KAT1), found in Arabidopsis thaliana (Mouse-ear cress).